The primary structure comprises 358 residues: Putative UDP-kanosamine synthase oxidoreductase subunit (358 aa).

As to quaternary structure, interacts with RifK.

It carries out the reaction UDP-alpha-D-glucose + NAD(+) = UDP-3-oxo-alpha-D-glucose + NADH + H(+). Its pathway is antibiotic biosynthesis; rifamycin B biosynthesis. In a complex with RifK, RifL may catalyze the oxidation of UDP-glucose to UDP-3-keto-D-glucose, which would then be used by RifK to produce UDP-kanosamine. Is not able to use dTDP-glucose as substrate. The sequence is that of Putative UDP-kanosamine synthase oxidoreductase subunit (rifL) from Amycolatopsis mediterranei (strain S699) (Nocardia mediterranei).